The primary structure comprises 624 residues: Chitin elicitor receptor kinase 1 (624 aa).

An N-terminal signal peptide occupies residues 1 to 18 (MEASTSLLVLVLAAAAFA). At 19–240 (AGTVTEAAGD…SPGKGASAGA (222 aa)) the chain is on the extracellular side. 3 disulfides stabilise this stretch: Cys30–Cys93, Cys34–Cys160, and Cys91–Cys158. Asn48 is a glycosylation site (N-linked (GlcNAc...) asparagine). Residue 115–121 (RGQIYTS) coordinates chitin. An N-linked (GlcNAc...) asparagine glycan is attached at Asn128. Position 142 to 148 (142 to 148 (PANNIPD)) interacts with chitin. N-linked (GlcNAc...) asparagine glycans are attached at residues Asn153 and Asn157. The 46-residue stretch at 173–218 (LTYPLRAEDTLASVAATYGLSSQLDVVRRYNPGMESATGSGIVYIP) folds into the LysM domain. N-linked (GlcNAc...) asparagine glycosylation occurs at Asn223. The chain crosses the membrane as a helical span at residues 241–261 (IAGGVVAGVVVLAAIFLYIIF). Residues 262 to 624 (YRRRKAKQAT…QGLVNLMSGR (363 aa)) lie on the Cytoplasmic side of the membrane. A Protein kinase domain is found at 324-599 (FSIGNKIGQG…RSVVVALMTL (276 aa)). ATP contacts are provided by residues 330 to 338 (IGQGGFGAV) and Lys351. Residue Asp443 is the Proton acceptor of the active site.

It belongs to the protein kinase superfamily. Ser/Thr protein kinase family. As to quaternary structure, homooligomer. Interacts with CEBIP. Interacts with LYP4 and LYP6. Interacts with RLCK176. Autophosphorylated; induced by chitin and derivatives. In terms of tissue distribution, expressed in seedlings, roots, shoots and stems, and, to a lower extent, in flowers.

Its subcellular location is the cell membrane. The enzyme catalyses L-seryl-[protein] + ATP = O-phospho-L-seryl-[protein] + ADP + H(+). The catalysed reaction is L-threonyl-[protein] + ATP = O-phospho-L-threonyl-[protein] + ADP + H(+). Functionally, lysin motif (LysM) receptor kinase required as a cell surface receptor for chitin elicitor (chitooligosaccharides) signaling leading to innate immunity in response to biotic stresses. Involved in the resistance to pathogenic fungi, probably by sensing microbe-associated molecular patterns (MAMP) and pathogen-associated molecular patterns (PAMP). Involved in the detection of microbial peptidoglycans (PGNs) and mediates PGN response. Plays dual roles in PGN and chitin signaling during innate immunity. Acts as an adapter for LYP4 and LYP6 and mediates signal transduction from the extracellular to intracellular spaces. Participates in the activation of defense genes during response to PGN and chitin. Phosphorylates the downstream partner RLCK185 in response to chitin elicitation. The polypeptide is Chitin elicitor receptor kinase 1 (Oryza sativa subsp. japonica (Rice)).